Consider the following 44-residue polypeptide: Cytochrome b559 subunit beta (44 aa).

Residues W19–A35 form a helical membrane-spanning segment. H23 lines the heme pocket.

It belongs to the PsbE/PsbF family. As to quaternary structure, heterodimer of an alpha subunit and a beta subunit. PSII is composed of 1 copy each of membrane proteins PsbA, PsbB, PsbC, PsbD, PsbE, PsbF, PsbH, PsbI, PsbJ, PsbK, PsbL, PsbM, PsbT, PsbX, PsbY, PsbZ, Psb30/Ycf12, at least 3 peripheral proteins of the oxygen-evolving complex and a large number of cofactors. It forms dimeric complexes. It depends on heme b as a cofactor.

It localises to the plastid. It is found in the chloroplast thylakoid membrane. This b-type cytochrome is tightly associated with the reaction center of photosystem II (PSII). PSII is a light-driven water:plastoquinone oxidoreductase that uses light energy to abstract electrons from H(2)O, generating O(2) and a proton gradient subsequently used for ATP formation. It consists of a core antenna complex that captures photons, and an electron transfer chain that converts photonic excitation into a charge separation. The protein is Cytochrome b559 subunit beta of Chlamydomonas reinhardtii (Chlamydomonas smithii).